A 137-amino-acid chain; its full sequence is Acyl carrier protein 4, chloroplastic (137 aa).

Residues 1-48 constitute a chloroplast transit peptide; that stretch reads MASLSTTSLSFKAPSTTISQVLRKASSSQSVTFGRFTSSTKSLRLQIS. Residues 53–128 enclose the Carrier domain; that stretch reads AETVQKVSDI…EAADLIEDLV (76 aa). At S88 the chain carries O-(pantetheine 4'-phosphoryl)serine.

The protein belongs to the acyl carrier protein (ACP) family. 4'-phosphopantetheine is transferred from CoA to a specific serine of apo-ACP by acpS. This modification is essential for activity because fatty acids are bound in thioester linkage to the sulfhydryl of the prosthetic group.

Its subcellular location is the plastid. It is found in the chloroplast. Functionally, carrier of the growing fatty acid chain in fatty acid biosynthesis that plays a major role in the biosynthesis of fatty acids in leaves. Required for the biosynthesis of chloroplast photosynthetic membrane lipids such as monogalactosyldiacylglycerol, digalactosyldiacylglycerol and phosphatidylglycerol. Is essential for the biosynthesis of the cuticular wax and cutin polymers in leaves, and for the establishment of systemic acquired resistance (SAR). This chain is Acyl carrier protein 4, chloroplastic (ACP4), found in Arabidopsis thaliana (Mouse-ear cress).